The chain runs to 253 residues: MICOS complex subunit mic25-b (253 aa).

The N-myristoyl glycine moiety is linked to residue Gly-2. The tract at residues 38 to 82 is disordered; sequence KDQSTWAASGAASGSATVPSKVGSSASHPAAASKDGAHKPTAAGV. The span at 44–53 shows a compositional bias: low complexity; it reads AASGAASGSA. The stretch at 87 to 116 forms a coiled coil; the sequence is AEEDLYRRYEREQTLIQEELARLAKREKDA. The CHCH domain occupies 206–248; it reads DPVCMDLQSNILKCYAENKQERLNCSDLAKEYQKCVSAAQKNL. 2 consecutive short sequence motifs (cx9C motif) follow at residues 209-219 and 230-240; these read CMDLQSNILKC and CSDLAKEYQKC. 2 disulfides stabilise this stretch: Cys-209-Cys-240 and Cys-219-Cys-230.

It belongs to the MICOS complex subunit Mic19 family. Metazoan Mic25 subfamily. As to quaternary structure, component of the mitochondrial contact site and cristae organizing system (MICOS) complex (also known as MINOS or MitOS complex).

It is found in the mitochondrion inner membrane. In terms of biological role, component of the MICOS complex, a large protein complex of the mitochondrial inner membrane that plays crucial roles in the maintenance of crista junctions, inner membrane architecture, and formation of contact sites to the outer membrane. The protein is MICOS complex subunit mic25-b (chchd6-b) of Xenopus laevis (African clawed frog).